Consider the following 725-residue polypeptide: Beta-adducin (725 aa).

The tract at residues 1–22 (MSEDTVPEAASPPPSQGQHYFD) is disordered. Phosphoserine occurs at positions 11 and 25. T55 is subject to Phosphothreonine. 2 positions are modified to phosphoserine: S60 and S344. Residues 425-444 (KQQKEKTRWLNTPNTYLRVN) form an interaction with calmodulin region. The tract at residues 525–725 (AEKSRSPSTE…KSKKKEKVES (201 aa)) is disordered. Residues S530 and S532 each carry the phosphoserine modification. T533 is subject to Phosphothreonine. S535 carries the post-translational modification Phosphoserine. Position 561 is a phosphothreonine (T561). The segment covering 566–588 (EEYKKEVERKKLEQEQEGEKDAA) has biased composition (basic and acidic residues). S594, S598, S602, and S606 each carry phosphoserine. Over residues 596–621 (VKSTPASPVQSPTRAGTKSPAVSPSK) the composition is skewed to polar residues. Residue T612 is modified to Phosphothreonine. 3 positions are modified to phosphoserine: S614, S618, and S620. Composition is skewed to basic and acidic residues over residues 622-631 (ASEDAKKTEV) and 639-654 (EPEK…KEEE). A Phosphothreonine modification is found at T674. A phosphoserine mark is found at S678, S685, S688, S692, S696, S698, S700, S702, and S712. The segment covering 687–700 (TSGPLSPEGSPSKS) has biased composition (low complexity). Basic residues predominate over residues 701 to 725 (PSKKKKKFRTPSFLKKSKKKEKVES). The segment at 703–720 (KKKKKFRTPSFLKKSKKK) is interaction with calmodulin.

This sequence belongs to the aldolase class II family. Adducin subfamily. As to quaternary structure, heterodimer of an alpha and a beta subunit. Found in a complex with ADD2, DMTN and SLC2A1. Interacts with SLC2A1. Found in liver, kidney, spleen, heart and brain.

It is found in the cytoplasm. The protein resides in the cytoskeleton. The protein localises to the cell membrane. Its function is as follows. Membrane-cytoskeleton-associated protein that promotes the assembly of the spectrin-actin network. Binds to the erythrocyte membrane receptor SLC2A1/GLUT1 and may therefore provide a link between the spectrin cytoskeleton to the plasma membrane. Binds to calmodulin. Calmodulin binds preferentially to the beta subunit. The protein is Beta-adducin (Add2) of Rattus norvegicus (Rat).